Here is a 202-residue protein sequence, read N- to C-terminus: Hypoxanthine-guanine phosphoribosyltransferase (202 aa).

Diphosphate-binding residues include Lys-66 and Gly-67. Positions 122 and 123 each coordinate Mg(2+). The active-site Proton acceptor is the Asp-126. GMP is bound by residues Lys-154, 175–176 (FV), and Asp-182. Arg-188 serves as a coordination point for diphosphate.

It belongs to the purine/pyrimidine phosphoribosyltransferase family. Mg(2+) is required as a cofactor.

It is found in the cytoplasm. The enzyme catalyses IMP + diphosphate = hypoxanthine + 5-phospho-alpha-D-ribose 1-diphosphate. It carries out the reaction GMP + diphosphate = guanine + 5-phospho-alpha-D-ribose 1-diphosphate. It functions in the pathway purine metabolism; IMP biosynthesis via salvage pathway; IMP from hypoxanthine: step 1/1. The protein operates within purine metabolism; GMP biosynthesis via salvage pathway; GMP from guanine: step 1/1. Functionally, purine salvage pathway enzyme that catalyzes the transfer of the ribosyl-5-phosphate group from 5-phospho-alpha-D-ribose 1-diphosphate (PRPP) to the N9 position of the 6-oxopurines hypoxanthine and guanine to form the corresponding ribonucleotides IMP (inosine 5'-monophosphate) and GMP (guanosine 5'-monophosphate), with the release of PPi. This is Hypoxanthine-guanine phosphoribosyltransferase (hpt) from Mycobacterium tuberculosis (strain CDC 1551 / Oshkosh).